The sequence spans 446 residues: N-succinylarginine dihydrolase (446 aa).

Substrate-binding positions include 21–30 (AGLSWGNVAS), Asn112, and 139–140 (HR). The active site involves Glu176. Arg216 provides a ligand contact to substrate. Residue His252 is part of the active site. Positions 254 and 364 each coordinate substrate. Cys370 serves as the catalytic Nucleophile.

The protein belongs to the succinylarginine dihydrolase family. In terms of assembly, homodimer.

It carries out the reaction N(2)-succinyl-L-arginine + 2 H2O + 2 H(+) = N(2)-succinyl-L-ornithine + 2 NH4(+) + CO2. It participates in amino-acid degradation; L-arginine degradation via AST pathway; L-glutamate and succinate from L-arginine: step 2/5. Functionally, catalyzes the hydrolysis of N(2)-succinylarginine into N(2)-succinylornithine, ammonia and CO(2). This chain is N-succinylarginine dihydrolase, found in Marinobacter nauticus (strain ATCC 700491 / DSM 11845 / VT8) (Marinobacter aquaeolei).